The chain runs to 383 residues: uncharacterized protein (383 aa).

It belongs to the peptidase M20 family.

This is an uncharacterized protein from Staphylococcus epidermidis (strain ATCC 35984 / DSM 28319 / BCRC 17069 / CCUG 31568 / BM 3577 / RP62A).